The primary structure comprises 557 residues: Dihydroxy-acid dehydratase (557 aa).

Cysteine 50 provides a ligand contact to [2Fe-2S] cluster. Aspartate 82 is a binding site for Mg(2+). Cysteine 123 lines the [2Fe-2S] cluster pocket. Mg(2+) contacts are provided by aspartate 124 and lysine 125. Lysine 125 carries the N6-carboxylysine modification. Cysteine 195 contacts [2Fe-2S] cluster. Glutamate 447 serves as a coordination point for Mg(2+). The active-site Proton acceptor is serine 473.

Belongs to the IlvD/Edd family. In terms of assembly, homodimer. The cofactor is [2Fe-2S] cluster. Mg(2+) serves as cofactor.

The catalysed reaction is (2R)-2,3-dihydroxy-3-methylbutanoate = 3-methyl-2-oxobutanoate + H2O. It catalyses the reaction (2R,3R)-2,3-dihydroxy-3-methylpentanoate = (S)-3-methyl-2-oxopentanoate + H2O. It participates in amino-acid biosynthesis; L-isoleucine biosynthesis; L-isoleucine from 2-oxobutanoate: step 3/4. The protein operates within amino-acid biosynthesis; L-valine biosynthesis; L-valine from pyruvate: step 3/4. Functionally, functions in the biosynthesis of branched-chain amino acids. Catalyzes the dehydration of (2R,3R)-2,3-dihydroxy-3-methylpentanoate (2,3-dihydroxy-3-methylvalerate) into 2-oxo-3-methylpentanoate (2-oxo-3-methylvalerate) and of (2R)-2,3-dihydroxy-3-methylbutanoate (2,3-dihydroxyisovalerate) into 2-oxo-3-methylbutanoate (2-oxoisovalerate), the penultimate precursor to L-isoleucine and L-valine, respectively. The polypeptide is Dihydroxy-acid dehydratase (Janthinobacterium sp. (strain Marseille) (Minibacterium massiliensis)).